A 367-amino-acid polypeptide reads, in one-letter code: Aminomethyltransferase (367 aa).

It belongs to the GcvT family. As to quaternary structure, the glycine cleavage system is composed of four proteins: P, T, L and H.

It carries out the reaction N(6)-[(R)-S(8)-aminomethyldihydrolipoyl]-L-lysyl-[protein] + (6S)-5,6,7,8-tetrahydrofolate = N(6)-[(R)-dihydrolipoyl]-L-lysyl-[protein] + (6R)-5,10-methylene-5,6,7,8-tetrahydrofolate + NH4(+). In terms of biological role, the glycine cleavage system catalyzes the degradation of glycine. The polypeptide is Aminomethyltransferase (Mycobacterium avium (strain 104)).